The sequence spans 245 residues: MTFRRRLLQFLALLFVVATLAQLWYLGQVLRLQHHNPDSSAYMHRAQKQGNVQQDWRDYDQISDYLKRAVLISEDAHFTQHTGFDWEGIRYALKRNMEAGKPVAGGSTITQQLAKNLYLSGERTYTRKAQEAVIALMLEIGLSKRRILELYLNVAQWGHQIYGAEAAAQHYFQISAAQLSPLQAAQLAAMLPRPNLYDFKGPTDYVQQRASWIQAQMALVRIPDPGTVPLPPPPEPTAPPEGNTQ.

Residues 10 to 30 (FLALLFVVATLAQLWYLGQVL) traverse the membrane as a helical segment. The segment at 224–245 (DPGTVPLPPPPEPTAPPEGNTQ) is disordered. Residues 226 to 239 (GTVPLPPPPEPTAP) are compositionally biased toward pro residues.

The protein belongs to the glycosyltransferase 51 family.

The protein localises to the cell inner membrane. The enzyme catalyses [GlcNAc-(1-&gt;4)-Mur2Ac(oyl-L-Ala-gamma-D-Glu-L-Lys-D-Ala-D-Ala)](n)-di-trans,octa-cis-undecaprenyl diphosphate + beta-D-GlcNAc-(1-&gt;4)-Mur2Ac(oyl-L-Ala-gamma-D-Glu-L-Lys-D-Ala-D-Ala)-di-trans,octa-cis-undecaprenyl diphosphate = [GlcNAc-(1-&gt;4)-Mur2Ac(oyl-L-Ala-gamma-D-Glu-L-Lys-D-Ala-D-Ala)](n+1)-di-trans,octa-cis-undecaprenyl diphosphate + di-trans,octa-cis-undecaprenyl diphosphate + H(+). It participates in cell wall biogenesis; peptidoglycan biosynthesis. Its function is as follows. Peptidoglycan polymerase that catalyzes glycan chain elongation from lipid-linked precursors. The sequence is that of Biosynthetic peptidoglycan transglycosylase from Alcanivorax borkumensis (strain ATCC 700651 / DSM 11573 / NCIMB 13689 / SK2).